The primary structure comprises 330 residues: Induced myeloid leukemia cell differentiation protein Mcl-1 homolog (330 aa).

Residues 85–155 (LAVPPEEMAA…PPEEEDDELY (71 aa)) form a PEST-like region. Position 101 is a phosphoserine (S101). Residue K116 forms a Glycyl lysine isopeptide (Lys-Gly) (interchain with G-Cter in ubiquitin) linkage. Residues 129–153 (EAAKSSGADGSLPSTPPPPEEEDDE) form a disordered region. S139 is modified (phosphoserine; by GSK3-alpha and GSK3-beta). S142 bears the Phosphoserine mark. Phosphothreonine; by MAPK is present on T143. Glycyl lysine isopeptide (Lys-Gly) (interchain with G-Cter in ubiquitin) cross-links involve residues K174 and K177. Residues 189–203 (ALETLRRVGDGVQRN) carry the BH3 motif. Residues 232-252 (HVFKDGVTNWGRIVTLISFGA) carry the BH1 motif. Positions 284–299 (DWLVKQRGWDGFVEFF) match the BH2 motif. The helical transmembrane segment at 307–329 (GIRNVLLAFAGVAGVGAGLAYLI) threads the bilayer.

The protein belongs to the Bcl-2 family. As to quaternary structure, interacts with HIF3A (via C-terminus domain). Interacts with BOK, BIK, BAX, BAK1, and TPT1. Interacts with unphosphorylated BAD. Interacts with BMF, BBC3 and PMAIP1. Interacts with BOP. Interacts with BCL2L11; may sequester BCL2L11 to prevent its pro-apoptotic activity. Interacts with GIMAP5 and HSPA8/HSC70; the interaction between HSPA8 and MCL1 is impaired in the absence of GIMAP5. Post-translationally, cleaved by CASP3 during apoptosis, yielding a pro-apoptotic C-terminal fragment. In terms of processing, rapidly degraded in the absence of phosphorylation in the PEST region. Phosphorylated on Ser-139, by GSK3, in response to IL3/interleukin-3 withdrawal. Phosphorylation at Ser-139 induces ubiquitination and proteasomal degradation, abrogating the anti-apoptotic activity. Treatment with taxol or okadaic acid induces phosphorylation on additional sites. Post-translationally, ubiquitinated. Ubiquitination is induced by phosphorylation at Ser-139. Deubiquitinated by USP20; leading to increased stability. Ubiquitous. Highly expressed in heart, spleen, lung, liver, skeletal muscle and kidney. Detected at lower levels in brain, ovary, oviduct and testis.

It is found in the membrane. The protein localises to the cytoplasm. The protein resides in the mitochondrion. Its subcellular location is the nucleus. It localises to the nucleoplasm. Involved in the regulation of apoptosis versus cell survival, and in the maintenance of viability but not of proliferation. Mediates its effects by interactions with a number of other regulators of apoptosis. The polypeptide is Induced myeloid leukemia cell differentiation protein Mcl-1 homolog (Mcl1) (Rattus norvegicus (Rat)).